A 266-amino-acid polypeptide reads, in one-letter code: Indole-3-glycerol phosphate synthase (266 aa).

Belongs to the TrpC family.

It catalyses the reaction 1-(2-carboxyphenylamino)-1-deoxy-D-ribulose 5-phosphate + H(+) = (1S,2R)-1-C-(indol-3-yl)glycerol 3-phosphate + CO2 + H2O. It participates in amino-acid biosynthesis; L-tryptophan biosynthesis; L-tryptophan from chorismate: step 4/5. In Paracidovorax citrulli (strain AAC00-1) (Acidovorax citrulli), this protein is Indole-3-glycerol phosphate synthase.